We begin with the raw amino-acid sequence, 451 residues long: Protoheme IX farnesyltransferase, mitochondrial (451 aa).

Transmembrane regions (helical) follow at residues 149-169, 240-260, 265-285, 289-309, 339-359, and 414-434; these read TILV…PATV, PTVA…YTSL, IINT…GWAA, LTHP…FPHF, VALR…YFNI, and KAFF…ILHK.

This sequence belongs to the UbiA prenyltransferase family.

It localises to the mitochondrion membrane. In terms of biological role, converts protoheme IX and farnesyl diphosphate to heme O. The protein is Protoheme IX farnesyltransferase, mitochondrial (COX10) of Candida glabrata (strain ATCC 2001 / BCRC 20586 / JCM 3761 / NBRC 0622 / NRRL Y-65 / CBS 138) (Yeast).